The chain runs to 1264 residues: Valine--tRNA ligase (1264 aa).

An N-acetylserine modification is found at S2. Residues 89–219 (GSRAAVLVQQ…YSGARSVTQQ (131 aa)) enclose the GST C-terminal domain. A compositionally biased stretch (polar residues) spans 218 to 230 (QQPGSEITAPQKT). The segment at 218–296 (QQPGSEITAP…GEKKDVSGTM (79 aa)) is disordered. Composition is skewed to basic and acidic residues over residues 234–248 (LKKE…EKFQ) and 260–275 (HGEK…KRDP). A 'HIGH' region motif is present at residues 344 to 354 (PNVTGSLHLGH). Phosphoserine occurs at positions 437 and 527. K645 carries the N6-acetyllysine modification. The 'KMSKS' region motif lies at 862–866 (KMSKS). K865 lines the ATP pocket.

Belongs to the class-I aminoacyl-tRNA synthetase family. Forms high-molecular-mass aggregates with elongation factor 1.

It catalyses the reaction tRNA(Val) + L-valine + ATP = L-valyl-tRNA(Val) + AMP + diphosphate. With respect to regulation, can be regulated by protein kinase C-dependent phosphorylation. This chain is Valine--tRNA ligase (Vars1), found in Rattus norvegicus (Rat).